The chain runs to 704 residues: Polyribonucleotide nucleotidyltransferase (704 aa).

Residues D487 and D493 each contribute to the Mg(2+) site. Positions 554 to 613 (PRLLTIKIHPDKIREVIGKGGSTIQAITKETGTQIDIQDDGTIIIASVNAIAAQAAKSRI) constitute a KH domain. Residues 623–691 (GRIYEGKVAK…KQGRIRLSIK (69 aa)) form the S1 motif domain.

It belongs to the polyribonucleotide nucleotidyltransferase family. As to quaternary structure, component of the RNA degradosome, which is a multiprotein complex involved in RNA processing and mRNA degradation. Mg(2+) serves as cofactor.

It localises to the cytoplasm. The catalysed reaction is RNA(n+1) + phosphate = RNA(n) + a ribonucleoside 5'-diphosphate. Functionally, involved in mRNA degradation. Catalyzes the phosphorolysis of single-stranded polyribonucleotides processively in the 3'- to 5'-direction. The polypeptide is Polyribonucleotide nucleotidyltransferase (Xanthomonas axonopodis pv. citri (strain 306)).